The following is a 173-amino-acid chain: Zinc finger matrin-type protein 5 (173 aa).

The segment at 51-79 (ERSKEVCRKFVQTGQCVFGTSCRFSHMSE) adopts a C3H1-type zinc-finger fold. The disordered stretch occupies residues 83–111 (KMLEQKIDDEKRQKEDPDQDGSSERSVDE).

In terms of assembly, component of the U11/U12 snRNPs that are part of the U12-type spliceosome.

The protein resides in the nucleus. The chain is Zinc finger matrin-type protein 5 (zmat5) from Danio rerio (Zebrafish).